Here is a 519-residue protein sequence, read N- to C-terminus: RLISAVILAVCSLISRRKPSPGSKKKRPPGPWRLPLIGNLLHLATSQPHVALRDLAMKHGPVMYLRLGQVDAVVISSPAAAQEVLRDKDTTFASRPSLLVADIILYGSMDMSFAPYGGNWRMLRKLCMSELLNTHKVRQLAAVRDSETLSLVRKVVYAAGAGGGGRGQRGEAPVVNLGRLVLSCSMAITGRATLGKLCGDEIMSVVDVAVLYGSGFCAGDLFPSLWFVDVVTGLTRRLWTARRRLDAIFDRILAECEARQRQEEKMTGDDGFLGVLLRIRDDDGEPETGGISTTSIKAILFDMLAGGTETTSSAAEWIMSELMRKPEAMAKAQAEVRGALDGKSPEDHEGQMDKLSYTRMVVKEGLRLHPVLPLLLPRSCQETCDVGGFEVTKGTKVIVNAWALARSPERWHDPEEFRPERFADDDGSSAAVAVDYRGSQFEYIPFGSGRRMCPGNTFGLAALELMVARLLYYFDWSLPDGMRPEELDMDTVVGSTMRRRNHLHLVPSPYKETELTVGI.

Residue Cys-453 coordinates heme.

Belongs to the cytochrome P450 family. It depends on heme as a cofactor.

The protein resides in the membrane. In Sorghum bicolor (Sorghum), this protein is Cytochrome P450 CYP99A1 (CYP99A1).